A 116-amino-acid polypeptide reads, in one-letter code: NADH-ubiquinone oxidoreductase chain 3 (116 aa).

3 consecutive transmembrane segments (helical) span residues 3-23, 56-76, and 85-105; these read LITT…TISF, FFLI…LLPL, and PALT…GLIY.

It belongs to the complex I subunit 3 family.

It localises to the mitochondrion membrane. The catalysed reaction is a ubiquinone + NADH + 5 H(+)(in) = a ubiquinol + NAD(+) + 4 H(+)(out). Core subunit of the mitochondrial membrane respiratory chain NADH dehydrogenase (Complex I) that is believed to belong to the minimal assembly required for catalysis. Complex I functions in the transfer of electrons from NADH to the respiratory chain. The immediate electron acceptor for the enzyme is believed to be ubiquinone. The protein is NADH-ubiquinone oxidoreductase chain 3 (MT-ND3) of Oncorhynchus masou (Cherry salmon).